The chain runs to 269 residues: 4-hydroxy-tetrahydrodipicolinate reductase (269 aa).

Residues glycine 11 to methionine 16 and glutamate 37 contribute to the NAD(+) site. Arginine 38 serves as a coordination point for NADP(+). NAD(+) contacts are provided by residues glycine 101 to threonine 103 and alanine 125 to methionine 128. The active-site Proton donor/acceptor is the histidine 158. Position 159 (histidine 159) interacts with (S)-2,3,4,5-tetrahydrodipicolinate. Lysine 162 acts as the Proton donor in catalysis. Glycine 168–threonine 169 contributes to the (S)-2,3,4,5-tetrahydrodipicolinate binding site.

Belongs to the DapB family.

It localises to the cytoplasm. It carries out the reaction (S)-2,3,4,5-tetrahydrodipicolinate + NAD(+) + H2O = (2S,4S)-4-hydroxy-2,3,4,5-tetrahydrodipicolinate + NADH + H(+). The catalysed reaction is (S)-2,3,4,5-tetrahydrodipicolinate + NADP(+) + H2O = (2S,4S)-4-hydroxy-2,3,4,5-tetrahydrodipicolinate + NADPH + H(+). It functions in the pathway amino-acid biosynthesis; L-lysine biosynthesis via DAP pathway; (S)-tetrahydrodipicolinate from L-aspartate: step 4/4. Catalyzes the conversion of 4-hydroxy-tetrahydrodipicolinate (HTPA) to tetrahydrodipicolinate. The chain is 4-hydroxy-tetrahydrodipicolinate reductase from Ruegeria sp. (strain TM1040) (Silicibacter sp.).